A 63-amino-acid polypeptide reads, in one-letter code: Large ribosomal subunit protein uL29 (63 aa).

This sequence belongs to the universal ribosomal protein uL29 family.

In Aggregatibacter actinomycetemcomitans (Actinobacillus actinomycetemcomitans), this protein is Large ribosomal subunit protein uL29 (rpmC).